A 98-amino-acid polypeptide reads, in one-letter code: Cystatin-B (98 aa).

Position 1 is an N-acetylmethionine (methionine 1). The Secondary area of contact motif lies at 46-50 (QVVAG).

The protein belongs to the cystatin family.

The protein resides in the cytoplasm. Functionally, this is an intracellular thiol proteinase inhibitor. The chain is Cystatin-B (CSTB) from Sus scrofa (Pig).